The primary structure comprises 98 residues: Large ribosomal subunit protein eL21 (98 aa).

The segment covering 1–24 (MVKKAHSFRRKTRGKLSKHPRRRG) has biased composition (basic residues). Positions 1–27 (MVKKAHSFRRKTRGKLSKHPRRRGLPP) are disordered.

Belongs to the eukaryotic ribosomal protein eL21 family. As to quaternary structure, part of the 50S ribosomal subunit.

The chain is Large ribosomal subunit protein eL21 from Thermococcus kodakarensis (strain ATCC BAA-918 / JCM 12380 / KOD1) (Pyrococcus kodakaraensis (strain KOD1)).